The sequence spans 483 residues: MGLHYLFGFCLALFSFSAIAAGPVSTEVAAGTTTYRVTNTTVRTPPNVTLSPVRDITPYVEKIPNKGLAQAAQGRLIVAQRAASVPVTGFFNVSGAVVKSGAKSFLRSAGRASGIGLGLAALLEAADWVFDEEGEIVKPLPGGGSPVLMPRPVILNEYTVTGSAGQWSISKEYEPDPRSVPGWYSYNGNPVWVSAVEDVGFTWRYWYFADVLMDGQGRPNYLVAYSDSGPNEYWQDVGGYSLDSLPTEPEFVPLTDAELEAGIDQYYEPDPDDWRNLFPYIEPDSFTIETPIPSLDLSPVVSSSTNNQTGKVTVTETTTSVDFEVSDNNSSQPSISVNETTTENVYVDGDLVSSETNTTVTNPPSSGTSTPPSSGSGSDFQLPSFCSWATAVCDWFDWTQEPIDEEPDLSGIISDIDDLERTKDISFGSKSCPAPIALDIEFLDMSVDLSFEWFCELAGIIYFMVMASAYVLAAYITLGVVRG.

An N-terminal signal peptide occupies residues 1–20; the sequence is MGLHYLFGFCLALFSFSAIA. Disordered regions lie at residues 324-343 and 354-378; these read EVSD…TTTE and SETN…GSGS. Positions 326–343 are enriched in polar residues; that stretch reads SDNNSSQPSISVNETTTE. Residues 460-480 traverse the membrane as a helical segment; sequence IIYFMVMASAYVLAAYITLGV.

The protein belongs to the inovirus G3P protein family. As to quaternary structure, interacts with G6P; this interaction is required for proper integration of G3P and G6P into the virion. Interacts with G8P. Interacts with the tip of the host pilus.

Its subcellular location is the virion. It is found in the host membrane. Its function is as follows. Plays essential roles both in the penetration of the viral genome into the bacterial host via pilus retraction and in the extrusion process. During the initial step of infection, G3P mediates adsorption of the phage to its primary receptor, the tip of host type IV PAO pilus. Attachment of the phage causes pilus retraction bringing the viral particle into close proximity of the host cell inner membrane. Subsequent interaction with a secondary host entry receptor induces penetration of the viral DNA into the host cytoplasm. In the extrusion process, G3P mediates the release of the membrane-anchored virion from the cell via its C-terminal domain. The chain is Attachment protein G3P (III) from Pseudomonas phage Pf3 (Bacteriophage Pf3).